We begin with the raw amino-acid sequence, 324 residues long: Ribose 1,5-bisphosphate isomerase (324 aa).

Residues 22 to 25 (RGAG) and Arg-65 each bind substrate. Catalysis depends on Cys-135, which acts as the Proton acceptor. Position 137–139 (137–139 (SKA)) interacts with substrate. The active-site Proton donor is the Asp-204. Residue Lys-240 participates in substrate binding.

This sequence belongs to the eIF-2B alpha/beta/delta subunits family. R15P isomerase subfamily.

The enzyme catalyses alpha-D-ribose 1,5-bisphosphate = D-ribulose 1,5-bisphosphate. Its function is as follows. Catalyzes the isomerization of ribose 1,5-bisphosphate (R15P) to ribulose 1,5-bisphosphate (RuBP), the CO(2) acceptor and substrate for RubisCO. Functions in an archaeal AMP degradation pathway, together with AMP phosphorylase and RubisCO. This Pyrococcus furiosus (strain ATCC 43587 / DSM 3638 / JCM 8422 / Vc1) protein is Ribose 1,5-bisphosphate isomerase.